The chain runs to 427 residues: 3-phosphoshikimate 1-carboxyvinyltransferase (427 aa).

Lys-22, Ser-23, and Arg-27 together coordinate 3-phosphoshikimate. Residue Lys-22 participates in phosphoenolpyruvate binding. Positions 93 and 122 each coordinate phosphoenolpyruvate. 3-phosphoshikimate-binding residues include Ser-167, Gln-169, Asp-315, and Lys-342. Gln-169 serves as a coordination point for phosphoenolpyruvate. Asp-315 (proton acceptor) is an active-site residue. The phosphoenolpyruvate site is built by Arg-346 and Arg-387.

The protein belongs to the EPSP synthase family. Monomer.

Its subcellular location is the cytoplasm. It catalyses the reaction 3-phosphoshikimate + phosphoenolpyruvate = 5-O-(1-carboxyvinyl)-3-phosphoshikimate + phosphate. It functions in the pathway metabolic intermediate biosynthesis; chorismate biosynthesis; chorismate from D-erythrose 4-phosphate and phosphoenolpyruvate: step 6/7. In terms of biological role, catalyzes the transfer of the enolpyruvyl moiety of phosphoenolpyruvate (PEP) to the 5-hydroxyl of shikimate-3-phosphate (S3P) to produce enolpyruvyl shikimate-3-phosphate and inorganic phosphate. This is 3-phosphoshikimate 1-carboxyvinyltransferase from Thermus thermophilus (strain ATCC BAA-163 / DSM 7039 / HB27).